A 171-amino-acid polypeptide reads, in one-letter code: Protein TIFY 11d (171 aa).

One can recognise a Tify domain in the interval 65-100; it reads PSAGTAPLTIFYDGRMVVVDDVPVEKAAELMRLAGS. A Jas motif is present at residues 117 to 142; it reads PIARKASLQRFLQKRKHRITTTSEPY. The short motif at 119-126 is the Nuclear localization signal element; that stretch reads ARKASLQR.

Belongs to the TIFY/JAZ family. Interacts with BHLH148 and COI1A. Interacts with COI1A, COI1B and COI2 in a coronatine-dependent manner. Coronatine is an analog of jasmonoyl isoleucine (JA-Ile). Post-translationally, ubiquitinated. Increase in jasmonoyl isoleucine (JA-Ile) levels mediates its degradation via COI1A-mediated proteasome pathway.

It is found in the nucleus. Functionally, repressor of jasmonate (JA) responses. May act on an initial response of JA-regulated gene expression toward drought tolerance as part of a BHLH148-TIFY11D/JAZ12-COI1A complex. This is Protein TIFY 11d from Oryza sativa subsp. japonica (Rice).